A 466-amino-acid polypeptide reads, in one-letter code: Tyrosinase HcTyr1 (466 aa).

Residues His-43, His-78, His-87, His-211, His-215, and His-238 each coordinate Cu cation.

This sequence belongs to the tyrosinase family. Monomer. Formation of a dimer is observed when the protein is in its holo-form. The cofactor is Cu(2+). In terms of processing, in vitro, the C-terminal lid-domain is slowly cleaved off in an autoprocessive time dependent manner, leading to the formation of cleaved-HcTyr1. The processing rate is not influenced by factors such as pH and added metal ions.

It catalyses the reaction L-tyrosine + O2 = L-dopaquinone + H2O. It carries out the reaction 2 L-tyrosine + O2 = 2 L-dopa. The catalysed reaction is 2 L-dopa + O2 = 2 L-dopaquinone + 2 H2O. With respect to regulation, cleavage of the lid-domain increases activity levels, affinity for substrate and turnover rate. Exhibits high saline tolerance. In terms of biological role, copper-containing oxidase that catalyzes the conversion of L-tyrosine to L-dopa and then to L-dopaquinone. Can use various phenols such as p-coumaric acid, phenol, pyrocatechol, syringol or pyrogallol. Accepts several of the constituents of lignin and potentially participates in lignin functionalization. This Hahella sp. (strain CCB-MM4) protein is Tyrosinase HcTyr1.